Consider the following 92-residue polypeptide: Small ribosomal subunit protein uS19 (92 aa).

This sequence belongs to the universal ribosomal protein uS19 family.

In terms of biological role, protein S19 forms a complex with S13 that binds strongly to the 16S ribosomal RNA. The polypeptide is Small ribosomal subunit protein uS19 (Pectobacterium atrosepticum (strain SCRI 1043 / ATCC BAA-672) (Erwinia carotovora subsp. atroseptica)).